A 591-amino-acid chain; its full sequence is Zinc finger protein 48 (591 aa).

Position 1 is an N-acetylmethionine (Met-1). 2 disordered regions span residues 1–24 (MEAS…IKEE) and 55–80 (GLGK…GSND). 2 stretches are compositionally biased toward basic and acidic residues: residues 8 to 24 (EFEH…IKEE) and 55 to 65 (GLGKRQPRDPV). Position 12 is a phosphoserine (Ser-12). Lys-58 is covalently cross-linked (Glycyl lysine isopeptide (Lys-Gly) (interchain with G-Cter in SUMO2)). 2 consecutive C2H2-type zinc fingers follow at residues 83-105 (AVCG…QRTH) and 111-133 (YKCG…QRTH). The disordered stretch occupies residues 131-160 (RTHTGEKAYRVRPPAPGPPKMPRSRIPAGE). Lys-150 participates in a covalent cross-link: Glycyl lysine isopeptide (Lys-Gly) (interchain with G-Cter in SUMO2). C2H2-type zinc fingers lie at residues 163–185 (TICG…QRTH) and 191–213 (YKCG…QRTH). The interval 206 to 241 (RIKHQRTHRGDQLPRPVVPRRQPSPAAPAAPHRPKA) is disordered. Residues 224 to 235 (PRRQPSPAAPAA) show a composition bias toward low complexity. A Glycyl lysine isopeptide (Lys-Gly) (interchain with G-Cter in SUMO2) cross-link involves residue Lys-240. 2 C2H2-type zinc fingers span residues 246 to 268 (YICT…QRSH) and 274 to 296 (FGCD…LRVH). Residue Lys-300 forms a Glycyl lysine isopeptide (Lys-Gly) (interchain with G-Cter in SUMO2) linkage. C2H2-type zinc fingers lie at residues 302-324 (YLCP…LRTH) and 330-352 (HACP…RLTH). Positions 372 to 429 (PPPPPLGTSPSLTPRSPSHSSDGPFGLPGLEPEPGGPQAGEPPPPLAGDKPHKCPECG) are disordered. Residues 379–404 (TSPSLTPRSPSHSSDGPFGLPGLEPE) show a composition bias toward low complexity. Residues 423 to 445 (HKCPECGKGFRRSSDLVKHHRVH) form a C2H2-type 9 zinc finger. Lys-449 is covalently cross-linked (Glycyl lysine isopeptide (Lys-Gly) (interchain with G-Cter in SUMO2)). A C2H2-type 10 zinc finger spans residues 451–473 (YLCPECGKGFADSSARVKHLRTH). The disordered stretch occupies residues 464–512 (SARVKHLRTHQGERTRPPPPPSTLLRPHNPPGSVPIVPQSRVQGRPSGP). Residues 480–496 (PPPPPSTLLRPHNPPGS) are compositionally biased toward pro residues. 2 C2H2-type zinc fingers span residues 516–538 (HVCG…RRTH) and 544–566 (YKCA…QRGH). Positions 564-591 (RGHLALKPFGVGDGPPRPLKEESPAGLE) are disordered. The span at 581-591 (PLKEESPAGLE) shows a compositional bias: basic and acidic residues. Lys-583 participates in a covalent cross-link: Glycyl lysine isopeptide (Lys-Gly) (interchain with G-Cter in SUMO2).

The protein belongs to the krueppel C2H2-type zinc-finger protein family.

The protein localises to the nucleus. Its function is as follows. May be involved in transcriptional regulation. The protein is Zinc finger protein 48 (Znf48) of Mus musculus (Mouse).